The following is a 1010-amino-acid chain: Translation initiation factor IF-2 (1010 aa).

Disordered stretches follow at residues 54-350 (KGLA…FEDD) and 364-420 (PSFT…RPES). A compositionally biased stretch (polar residues) spans 57 to 70 (ASSTSKNSTGQRES). The segment covering 112 to 124 (ISPPRPPVKPLVA) has biased composition (pro residues). The span at 145–155 (HSPSVKETPTE) shows a compositional bias: polar residues. The span at 200–258 (DRPRGEKRERGESENAPSPERRVGLAKPEKPTLNRKPDGKSPKLAEPAREVRETVELKR) shows a compositional bias: basic and acidic residues. Low complexity predominate over residues 378–389 (TAKAAPPGTPTA). Residues 406-419 (KSERQEPQEEKRPE) are compositionally biased toward basic and acidic residues. The tr-type G domain maps to 502–675 (RRPPVVTIMG…LLVAEVEELV (174 aa)). The G1 stretch occupies residues 511–518 (GHVDHGKT). 511-518 (GHVDHGKT) contacts GTP. The interval 536–540 (GITQH) is G2. The tract at residues 561–564 (DTPG) is G3. GTP contacts are provided by residues 561–565 (DTPGH) and 615–618 (NKVD). A G4 region spans residues 615-618 (NKVD). The segment at 651–653 (SAL) is G5.

The protein belongs to the TRAFAC class translation factor GTPase superfamily. Classic translation factor GTPase family. IF-2 subfamily.

It localises to the cytoplasm. Its function is as follows. One of the essential components for the initiation of protein synthesis. Protects formylmethionyl-tRNA from spontaneous hydrolysis and promotes its binding to the 30S ribosomal subunits. Also involved in the hydrolysis of GTP during the formation of the 70S ribosomal complex. The polypeptide is Translation initiation factor IF-2 (Microcystis aeruginosa (strain NIES-843 / IAM M-2473)).